Here is a 452-residue protein sequence, read N- to C-terminus: Glutamyl-tRNA(Gln) amidotransferase subunit A (452 aa).

Catalysis depends on charge relay system residues Lys-56 and Ser-131. The active-site Acyl-ester intermediate is Ser-155.

It belongs to the amidase family. GatA subfamily. As to quaternary structure, heterotrimer of A, B and C subunits.

The catalysed reaction is L-glutamyl-tRNA(Gln) + L-glutamine + ATP + H2O = L-glutaminyl-tRNA(Gln) + L-glutamate + ADP + phosphate + H(+). Its function is as follows. Allows the formation of correctly charged Gln-tRNA(Gln) through the transamidation of misacylated Glu-tRNA(Gln) in organisms which lack glutaminyl-tRNA synthetase. The reaction takes place in the presence of glutamine and ATP through an activated gamma-phospho-Glu-tRNA(Gln). The protein is Glutamyl-tRNA(Gln) amidotransferase subunit A of Campylobacter concisus (strain 13826).